A 460-amino-acid chain; its full sequence is MKKIKTYENKNILILGLGKSGFSVAKLLLKLGAKLTLNDKKDLSNDDRAAELDKLGVRIISGYHPVEIFDKEKFDYLVKNPGIPYENPMVEKALKLNIPVITEPEIALNVSEAPYVCVTGSNGKTTTVMLTQRIMDHHLSKNGGHAYAVGNIGVPISEVVEKATDKDLLVVEMSSFQLLGVTDIKPKVAAIVDIYNNVHLDYHKTFDNYVEAKLRITQSQDQNDYFIANFDQKNILDRELKKTKAKVQTFSETDKTADYFIGDEYLESKDDHQIMKISDIKIPGIHNQQNCLVAIAISKLMGADDSDIQYALSTFTGATHRLQYVMTYNDRKIYNDSKSTNIEAATVAIPSFKEPEVLIAGGLDRGFMFDSLVPLFKKYVKSIVLYGETKYLLADAARKAGIKDIVIVNTLQEAVPRAYELSEAGDVILFSPACASWDQFNTFEERGDFFVKFIKELKTK.

120 to 126 (GSNGKTT) lines the ATP pocket.

It belongs to the MurCDEF family.

Its subcellular location is the cytoplasm. It carries out the reaction UDP-N-acetyl-alpha-D-muramoyl-L-alanine + D-glutamate + ATP = UDP-N-acetyl-alpha-D-muramoyl-L-alanyl-D-glutamate + ADP + phosphate + H(+). The protein operates within cell wall biogenesis; peptidoglycan biosynthesis. Its function is as follows. Cell wall formation. Catalyzes the addition of glutamate to the nucleotide precursor UDP-N-acetylmuramoyl-L-alanine (UMA). The polypeptide is UDP-N-acetylmuramoylalanine--D-glutamate ligase (Lactobacillus gasseri (strain ATCC 33323 / DSM 20243 / BCRC 14619 / CIP 102991 / JCM 1131 / KCTC 3163 / NCIMB 11718 / NCTC 13722 / AM63)).